We begin with the raw amino-acid sequence, 260 residues long: Pyridoxine 5'-phosphate synthase (260 aa).

The 3-amino-2-oxopropyl phosphate site is built by Asn-10 and Arg-21. His-46 acts as the Proton acceptor in catalysis. The 1-deoxy-D-xylulose 5-phosphate site is built by Arg-48 and His-53. Glu-76 (proton acceptor) is an active-site residue. Residue Thr-113 participates in 1-deoxy-D-xylulose 5-phosphate binding. The active-site Proton donor is His-204. 3-amino-2-oxopropyl phosphate is bound by residues Asp-205 and 227 to 228; that span reads GH.

The protein belongs to the PNP synthase family. Homooctamer; tetramer of dimers.

It localises to the cytoplasm. The catalysed reaction is 3-amino-2-oxopropyl phosphate + 1-deoxy-D-xylulose 5-phosphate = pyridoxine 5'-phosphate + phosphate + 2 H2O + H(+). It participates in cofactor biosynthesis; pyridoxine 5'-phosphate biosynthesis; pyridoxine 5'-phosphate from D-erythrose 4-phosphate: step 5/5. Catalyzes the complicated ring closure reaction between the two acyclic compounds 1-deoxy-D-xylulose-5-phosphate (DXP) and 3-amino-2-oxopropyl phosphate (1-amino-acetone-3-phosphate or AAP) to form pyridoxine 5'-phosphate (PNP) and inorganic phosphate. The chain is Pyridoxine 5'-phosphate synthase from Xylella fastidiosa (strain 9a5c).